The chain runs to 332 residues: UDP-N-acetylenolpyruvoylglucosamine reductase (332 aa).

The region spanning 15–184 (IDVSAACFLE…TYVSFRLSKR (170 aa)) is the FAD-binding PCMH-type domain. Residue Arg160 is part of the active site. Ser232 serves as the catalytic Proton donor. Glu328 is an active-site residue.

Belongs to the MurB family. The cofactor is FAD.

It is found in the cytoplasm. It carries out the reaction UDP-N-acetyl-alpha-D-muramate + NADP(+) = UDP-N-acetyl-3-O-(1-carboxyvinyl)-alpha-D-glucosamine + NADPH + H(+). It participates in cell wall biogenesis; peptidoglycan biosynthesis. Its function is as follows. Cell wall formation. This chain is UDP-N-acetylenolpyruvoylglucosamine reductase, found in Bacteroides fragilis (strain YCH46).